A 511-amino-acid polypeptide reads, in one-letter code: ATP synthase subunit alpha (511 aa).

Position 170 to 177 (170 to 177 (GDRQTGKT)) interacts with ATP.

It belongs to the ATPase alpha/beta chains family. In terms of assembly, F-type ATPases have 2 components, CF(1) - the catalytic core - and CF(0) - the membrane proton channel. CF(1) has five subunits: alpha(3), beta(3), gamma(1), delta(1), epsilon(1). CF(0) has three main subunits: a(1), b(2) and c(9-12). The alpha and beta chains form an alternating ring which encloses part of the gamma chain. CF(1) is attached to CF(0) by a central stalk formed by the gamma and epsilon chains, while a peripheral stalk is formed by the delta and b chains.

Its subcellular location is the cell inner membrane. It catalyses the reaction ATP + H2O + 4 H(+)(in) = ADP + phosphate + 5 H(+)(out). Its function is as follows. Produces ATP from ADP in the presence of a proton gradient across the membrane. The alpha chain is a regulatory subunit. The sequence is that of ATP synthase subunit alpha from Granulibacter bethesdensis (strain ATCC BAA-1260 / CGDNIH1).